Reading from the N-terminus, the 220-residue chain is Small ribosomal subunit protein uS3 (220 aa).

Positions 38–106 (IREFVKKSLN…EVFLNIVEVR (69 aa)) constitute a KH type-2 domain.

It belongs to the universal ribosomal protein uS3 family. In terms of assembly, part of the 30S ribosomal subunit. Forms a tight complex with proteins S10 and S14.

Functionally, binds the lower part of the 30S subunit head. Binds mRNA in the 70S ribosome, positioning it for translation. The sequence is that of Small ribosomal subunit protein uS3 from Myxococcus xanthus (strain DK1622).